Consider the following 107-residue polypeptide: Iron-binding protein IscA (107 aa).

The Fe cation site is built by cysteine 35, cysteine 99, and cysteine 101.

It belongs to the HesB/IscA family. In terms of assembly, homodimer; may form tetramers and higher multimers. Fe cation is required as a cofactor.

In terms of biological role, is able to transfer iron-sulfur clusters to apo-ferredoxin. Multiple cycles of [2Fe2S] cluster formation and transfer are observed, suggesting that IscA acts catalytically. Recruits intracellular free iron so as to provide iron for the assembly of transient iron-sulfur cluster in IscU in the presence of IscS, L-cysteine and the thioredoxin reductase system TrxA/TrxB. This chain is Iron-binding protein IscA, found in Pectobacterium atrosepticum (strain SCRI 1043 / ATCC BAA-672) (Erwinia carotovora subsp. atroseptica).